The primary structure comprises 30 residues: Elongation factor 1-delta (30 aa).

The protein belongs to the EF-1-beta/EF-1-delta family. In terms of assembly, EF-1 is composed of 4 subunits: alpha, beta (1B-alpha=beta'), delta (1B-beta), and gamma (1B-gamma).

Functionally, EF-1-beta and EF-1-delta stimulate the exchange of GDP bound to EF-1-alpha to GTP. The protein is Elongation factor 1-delta of Populus euphratica (Euphrates poplar).